A 115-amino-acid polypeptide reads, in one-letter code: Class I hydrophobin C (115 aa).

An N-terminal signal peptide occupies residues 1–19; that stretch reads MFSRVLVAALVALPVLVSA. 4 disulfide bridges follow: cysteine 36-cysteine 93, cysteine 43-cysteine 87, cysteine 44-cysteine 74, and cysteine 94-cysteine 108.

It belongs to the fungal hydrophobin family. As to quaternary structure, self-assembles to form functional amyloid fibrils called rodlets. Self-assembly into fibrillar rodlets occurs spontaneously at hydrophobic:hydrophilic interfaces and the rodlets further associate laterally to form amphipathic monolayers.

The protein resides in the secreted. It is found in the cell wall. Its function is as follows. Aerial growth, conidiation, and dispersal of filamentous fungi in the environment rely upon a capability of their secreting small amphipathic proteins called hydrophobins (HPBs) with low sequence identity. Class I can self-assemble into an outermost layer of rodlet bundles on aerial cell surfaces, conferring cellular hydrophobicity that supports fungal growth, development and dispersal; whereas Class II form highly ordered films at water-air interfaces through intermolecular interactions but contribute nothing to the rodlet structure. This Agaricus bisporus (White button mushroom) protein is Class I hydrophobin C.